Reading from the N-terminus, the 208-residue chain is MASKCPKCDKTVYFAEKVSSLGKDWHKFCLKCERCNKTLTPGGHAEHDGKPFCHKPCYATLFGPKGVNIGGAGSYIYEKPQTEAPQVTGPIEVPVVRTEERKTSGPPKGPSKASSVTTFTGEPNMCPRCNKRVYFAEKVTSLGKDWHRPCLRCERCSKTLTPGGHAEHDGQPYCHKPCYGILFGPKGVNTGAVGSYIYDKDPEGTVQP.

The 53-residue stretch at 5-57 (CPKCDKTVYFAEKVSSLGKDWHKFCLKCERCNKTLTPGGHAEHDGKPFCHKPC) folds into the LIM zinc-binding 1 domain. Residue Lys23 is modified to N6-acetyllysine. Ser104 is modified (phosphoserine). Residues 126–178 (CPRCNKRVYFAEKVTSLGKDWHRPCLRCERCSKTLTPGGHAEHDGQPYCHKPC) enclose the LIM zinc-binding 2 domain. An N6-acetyllysine mark is found at Lys138 and Lys144.

Interacts with TGFB1I1.

The chain is Cysteine-rich protein 2 (Crip2) from Mus musculus (Mouse).